Here is a 312-residue protein sequence, read N- to C-terminus: Malate dehydrogenase (312 aa).

NAD(+) is bound by residues 7-13 and Asp34; that span reads GAAGGIG. Substrate is bound by residues Arg81 and Arg87. NAD(+) is bound by residues Asn94 and 117-119; that span reads ITN. The substrate site is built by Asn119 and Arg153. His177 acts as the Proton acceptor in catalysis. Met228 serves as a coordination point for NAD(+).

The protein belongs to the LDH/MDH superfamily. MDH type 1 family. Homodimer.

It catalyses the reaction (S)-malate + NAD(+) = oxaloacetate + NADH + H(+). Its function is as follows. Catalyzes the reversible oxidation of malate to oxaloacetate. In Mannheimia succiniciproducens (strain KCTC 0769BP / MBEL55E), this protein is Malate dehydrogenase.